A 249-amino-acid polypeptide reads, in one-letter code: 2,3-bisphosphoglycerate-dependent phosphoglycerate mutase (249 aa).

Substrate contacts are provided by residues 8–15, 21–22, Arg60, 87–90, Lys98, 114–115, and 183–184; these read RHGESVWN, TG, ERHY, RR, and GN. His9 (tele-phosphohistidine intermediate) is an active-site residue. The active-site Proton donor/acceptor is Glu87.

Belongs to the phosphoglycerate mutase family. BPG-dependent PGAM subfamily.

The enzyme catalyses (2R)-2-phosphoglycerate = (2R)-3-phosphoglycerate. The protein operates within carbohydrate degradation; glycolysis; pyruvate from D-glyceraldehyde 3-phosphate: step 3/5. In terms of biological role, catalyzes the interconversion of 2-phosphoglycerate and 3-phosphoglycerate. The protein is 2,3-bisphosphoglycerate-dependent phosphoglycerate mutase of Chloroherpeton thalassium (strain ATCC 35110 / GB-78).